A 399-amino-acid polypeptide reads, in one-letter code: F-box/kelch-repeat protein At5g48980 (399 aa).

Polar residues predominate over residues 1-11; the sequence is MADSQRLSTAS. Residues 1–29 are disordered; it reads MADSQRLSTASGVKDGQPPWKKKKLSNDT. Positions 29 to 75 constitute an F-box domain; sequence TTSNPSLPYDVILIILARVSRSYYTNLSLVSKSFRSILTSPELYKTR. The stretch at 199–248 is one Kelch repeat; the sequence is IVYLPGSFESPDSLNCVEVYNTMTQTWKPVPPEKRMFKLENLEKKIYYKS.

This Arabidopsis thaliana (Mouse-ear cress) protein is F-box/kelch-repeat protein At5g48980.